The chain runs to 147 residues: Large ribosomal subunit protein uL15 (147 aa).

The span at M1 to R13 shows a compositional bias: basic and acidic residues. Residues M1 to Q54 are disordered. The span at K36 to H45 shows a compositional bias: basic residues.

The protein belongs to the universal ribosomal protein uL15 family. In terms of assembly, part of the 50S ribosomal subunit.

Its function is as follows. Binds to the 23S rRNA. The protein is Large ribosomal subunit protein uL15 of Malacoplasma penetrans (strain HF-2) (Mycoplasma penetrans).